Here is a 923-residue protein sequence, read N- to C-terminus: Protocadherin gamma-B4 (923 aa).

The first 30 residues, 1-30, serve as a signal peptide directing secretion; the sequence is MGSGAGELGRAERLPVLFLFLLSLFCPALC. 6 consecutive Cadherin domains span residues 31 to 133, 134 to 242, 243 to 345, 346 to 450, 451 to 560, and 568 to 673; these read EQIR…TPKF, TQNS…APVF, SQDI…APEV, IFQS…APVF, SQSS…APRV, and DGSA…LPDI. Over 31–689 the chain is Extracellular; the sequence is EQIRYRIPEE…SDLEAELQFY (659 aa). 2 N-linked (GlcNAc...) asparagine glycosylation sites follow: asparagine 417 and asparagine 543. A helical membrane pass occupies residues 690–710; sequence LVVALALISVLFLVAMILAIA. Residues 711-923 lie on the Cytoplasmic side of the membrane; that stretch reads LRLRRSSSPA…KKKSGKKEKK (213 aa). 2 disordered regions span residues 797 to 832 and 893 to 923; these read SHQQAPPNTDWRFSQAQRPGTSGSQNGDDTGTWPNN and ATLTNAAGKRDGKAPAGGNGNKKKSGKKEKK. A compositionally biased stretch (basic residues) spans 913-923; that stretch reads NKKKSGKKEKK.

Its subcellular location is the cell membrane. Potential calcium-dependent cell-adhesion protein. May be involved in the establishment and maintenance of specific neuronal connections in the brain. This chain is Protocadherin gamma-B4 (PCDHGB4), found in Pan troglodytes (Chimpanzee).